The primary structure comprises 396 residues: DNA polymerase processivity factor (396 aa).

A disordered region spans residues 306–396 (AEGGESSQKV…VPKTTFNPLI (91 aa)). The segment covering 376 to 386 (SDSSQSRDRGK) has biased composition (basic and acidic residues).

This sequence belongs to the herpesviridae DNA polymerase accessory subunit family. Homooligomerizes and adopts an oligomeric ring-shaped structure composed of 6 subunits. Forms a complex with the DNA-binding protein, the DNA polymerase subunit, and the alkaline exonuclease.

The protein resides in the virion tegument. Its subcellular location is the host nucleus. Plays an essential role in the viral lytic DNA replication by acting as the polymerase accessory subunit. Stimulates the viral DNA polymerase activity and appears to function with it as a holoenzyme. Increases the processivity of the viral polymerase, probably by acting as a sliding clamp that prevents dissociation of the polymerase from the active template. The protein is DNA polymerase processivity factor (ORF59) of Homo sapiens (Human).